A 653-amino-acid chain; its full sequence is Chaperone protein DnaK (653 aa).

Residue Thr200 is modified to Phosphothreonine; by autocatalysis. Positions 615-653 (AEAAAAGAAGAGGAGASAGGASQQQDDVVDAEFKEVKKD) are disordered. The segment covering 623-632 (AGAGGAGASA) has biased composition (gly residues).

It belongs to the heat shock protein 70 family.

Its function is as follows. Acts as a chaperone. The sequence is that of Chaperone protein DnaK from Paraburkholderia xenovorans (strain LB400).